A 122-amino-acid chain; its full sequence is Lycotoxin-Pa4a (122 aa).

Positions 1–20 (MKLGIFFSVFFLAMIHSCLS) are cleaved as a signal peptide. Positions 21–47 (ETNEDKNLESYFREDDLKALSFGEYAR) are excised as a propeptide. Intrachain disulfides connect C58–C73, C65–C82, C72–C100, and C84–C98.

This sequence belongs to the neurotoxin 19 (CSTX) family. Expressed by the venom gland.

Its subcellular location is the secreted. The protein localises to the target cell membrane. Potent antibacterial peptide with anti-inflammatory properties. Inhibits both Gram-negative and Gram-positive bacteria by disrupting both the outer membrane and the cytosolic membrane of bacteria. Also downregulates the expression of pro-inflammatory mediators (cyclooxygenase-2 (PTGS2/COX2), nitric oxide-induced synthase (NOS2), IL-1 beta (IL1B), TNF-alpha (TNF)) and upregulates the level of anti-inflammatory cytokine (IL10) by inactivating mitogen-activated protein kinase signaling in a lipopolysaccharide-stimulated murine macrophage cell line. The polypeptide is Lycotoxin-Pa4a (Pardosa astrigera (Wolf spider)).